The primary structure comprises 426 residues: Glutamate-1-semialdehyde 2,1-aminomutase (426 aa).

Position 265 is an N6-(pyridoxal phosphate)lysine (lysine 265).

This sequence belongs to the class-III pyridoxal-phosphate-dependent aminotransferase family. HemL subfamily. Homodimer. It depends on pyridoxal 5'-phosphate as a cofactor.

Its subcellular location is the cytoplasm. The catalysed reaction is (S)-4-amino-5-oxopentanoate = 5-aminolevulinate. The protein operates within porphyrin-containing compound metabolism; protoporphyrin-IX biosynthesis; 5-aminolevulinate from L-glutamyl-tRNA(Glu): step 2/2. This Salmonella typhi protein is Glutamate-1-semialdehyde 2,1-aminomutase.